The chain runs to 93 residues: uncharacterized protein (93 aa).

The chain crosses the membrane as a helical span at residues 20–40; it reads VYIYLCFSLMTIALICYLIHI. Residue asparagine 78 is glycosylated (N-linked (GlcNAc...) asparagine; by host).

The protein belongs to the asfivirus KP93L family.

It localises to the host membrane. This is an uncharacterized protein from Ornithodoros (relapsing fever ticks).